The following is a 350-amino-acid chain: S-adenosylmethionine:tRNA ribosyltransferase-isomerase (350 aa).

Belongs to the QueA family. In terms of assembly, monomer.

It is found in the cytoplasm. It carries out the reaction 7-aminomethyl-7-carbaguanosine(34) in tRNA + S-adenosyl-L-methionine = epoxyqueuosine(34) in tRNA + adenine + L-methionine + 2 H(+). Its pathway is tRNA modification; tRNA-queuosine biosynthesis. Its function is as follows. Transfers and isomerizes the ribose moiety from AdoMet to the 7-aminomethyl group of 7-deazaguanine (preQ1-tRNA) to give epoxyqueuosine (oQ-tRNA). The protein is S-adenosylmethionine:tRNA ribosyltransferase-isomerase of Saccharophagus degradans (strain 2-40 / ATCC 43961 / DSM 17024).